A 218-amino-acid chain; its full sequence is Oxygen regulatory protein NreC (218 aa).

The Response regulatory domain maps to 2–119 (KIVIADDHAV…QLILAVRTVY (118 aa)). Position 53 is a 4-aspartylphosphate (D53). The HTH luxR-type domain occupies 149 to 214 (SSDPFKILSK…ELVEYALKKK (66 aa)). The segment at residues 173–192 (NKDIAEKLFVSVKTVEAHKT) is a DNA-binding region (H-T-H motif).

Phosphorylated by NreB.

It is found in the cytoplasm. Functionally, member of the two-component regulatory system NreB/NreC involved in the control of dissimilatory nitrate/nitrite reduction in response to oxygen. Phosphorylated NreC binds to a GC-rich palindromic sequence at the promoters of the nitrate (narGHJI) and nitrite (nir) reductase operons, as well as the putative nitrate transporter gene narT, and activates their expression. This chain is Oxygen regulatory protein NreC (nreC), found in Staphylococcus epidermidis (strain ATCC 12228 / FDA PCI 1200).